Consider the following 104-residue polypeptide: ATP-dependent Clp protease adapter protein ClpS (104 aa).

This sequence belongs to the ClpS family. As to quaternary structure, binds to the N-terminal domain of the chaperone ClpA.

In terms of biological role, involved in the modulation of the specificity of the ClpAP-mediated ATP-dependent protein degradation. This chain is ATP-dependent Clp protease adapter protein ClpS, found in Neisseria gonorrhoeae (strain ATCC 700825 / FA 1090).